The chain runs to 439 residues: GTPase Der (439 aa).

EngA-type G domains follow at residues 4–166 and 175–350; these read PIVA…PAQD and IRIA…EEAS. GTP-binding positions include 10–17, 57–61, 119–122, 181–188, 228–232, and 293–296; these read GRPNVGKS, DTGGL, NKVE, DTAGM, and NKWD. The KH-like domain occupies 351–435; that stretch reads KRVATADLNN…PIRFFLRKRE (85 aa).

Belongs to the TRAFAC class TrmE-Era-EngA-EngB-Septin-like GTPase superfamily. EngA (Der) GTPase family. As to quaternary structure, associates with the 50S ribosomal subunit.

Functionally, GTPase that plays an essential role in the late steps of ribosome biogenesis. In Desulforamulus reducens (strain ATCC BAA-1160 / DSM 100696 / MI-1) (Desulfotomaculum reducens), this protein is GTPase Der.